Reading from the N-terminus, the 294-residue chain is Probable cobalamin biosynthesis protein CobD (294 aa).

4 helical membrane passes run 52–72, 73–93, 145–165, and 268–288; these read AGLL…IVPF, YAPF…SFAI, DSVV…AVIY, and IYWL…ATGV.

This sequence belongs to the CobD/CbiB family.

The protein resides in the cell membrane. It functions in the pathway cofactor biosynthesis; adenosylcobalamin biosynthesis. Converts cobyric acid to cobinamide by the addition of aminopropanol on the F carboxylic group. The chain is Probable cobalamin biosynthesis protein CobD from Thermococcus kodakarensis (strain ATCC BAA-918 / JCM 12380 / KOD1) (Pyrococcus kodakaraensis (strain KOD1)).